Here is a 77-residue protein sequence, read N- to C-terminus: DNA-directed RNA polymerase subunit Rpo5 (77 aa).

It belongs to the archaeal Rpo5/eukaryotic RPB5 RNA polymerase subunit family. Part of the RNA polymerase complex.

The protein localises to the cytoplasm. It carries out the reaction RNA(n) + a ribonucleoside 5'-triphosphate = RNA(n+1) + diphosphate. Its function is as follows. DNA-dependent RNA polymerase (RNAP) catalyzes the transcription of DNA into RNA using the four ribonucleoside triphosphates as substrates. This is DNA-directed RNA polymerase subunit Rpo5 from Methanosphaera stadtmanae (strain ATCC 43021 / DSM 3091 / JCM 11832 / MCB-3).